The chain runs to 492 residues: Catalase-3 (492 aa).

Catalysis depends on residues histidine 65 and asparagine 138. Tyrosine 348 contacts heme.

It belongs to the catalase family. As to quaternary structure, homotetramer and heterotetramer. At least six or seven isozymes are produced from a mixture of 3 gene products. Interacts with NCA1. Interacts with LSD1. Heme is required as a cofactor.

The protein localises to the peroxisome. It carries out the reaction 2 H2O2 = O2 + 2 H2O. In terms of biological role, occurs in almost all aerobically respiring organisms and serves to protect cells from the toxic effects of hydrogen peroxide. The polypeptide is Catalase-3 (CAT3) (Arabidopsis thaliana (Mouse-ear cress)).